The sequence spans 314 residues: GATA zinc finger domain-containing protein 19 (314 aa).

This chain is GATA zinc finger domain-containing protein 19 (gtaS), found in Dictyostelium discoideum (Social amoeba).